The chain runs to 236 residues: Phosphoribosylaminoimidazole-succinocarboxamide synthase (236 aa).

It belongs to the SAICAR synthetase family.

It catalyses the reaction 5-amino-1-(5-phospho-D-ribosyl)imidazole-4-carboxylate + L-aspartate + ATP = (2S)-2-[5-amino-1-(5-phospho-beta-D-ribosyl)imidazole-4-carboxamido]succinate + ADP + phosphate + 2 H(+). The protein operates within purine metabolism; IMP biosynthesis via de novo pathway; 5-amino-1-(5-phospho-D-ribosyl)imidazole-4-carboxamide from 5-amino-1-(5-phospho-D-ribosyl)imidazole-4-carboxylate: step 1/2. The sequence is that of Phosphoribosylaminoimidazole-succinocarboxamide synthase from Rickettsia typhi (strain ATCC VR-144 / Wilmington).